The sequence spans 63 residues: UPF0512 protein X (63 aa).

This sequence belongs to the UPF0512 family.

The protein is UPF0512 protein X of Dictyostelium discoideum (Social amoeba).